The following is a 171-amino-acid chain: Protein GrpE (171 aa).

A disordered region spans residues 1-20 (MNEEKEESPSTEAEGAGAEV).

The protein belongs to the GrpE family. As to quaternary structure, homodimer.

It is found in the cytoplasm. Its function is as follows. Participates actively in the response to hyperosmotic and heat shock by preventing the aggregation of stress-denatured proteins, in association with DnaK and GrpE. It is the nucleotide exchange factor for DnaK and may function as a thermosensor. Unfolded proteins bind initially to DnaJ; upon interaction with the DnaJ-bound protein, DnaK hydrolyzes its bound ATP, resulting in the formation of a stable complex. GrpE releases ADP from DnaK; ATP binding to DnaK triggers the release of the substrate protein, thus completing the reaction cycle. Several rounds of ATP-dependent interactions between DnaJ, DnaK and GrpE are required for fully efficient folding. The protein is Protein GrpE of Acidithiobacillus ferrooxidans (strain ATCC 23270 / DSM 14882 / CIP 104768 / NCIMB 8455) (Ferrobacillus ferrooxidans (strain ATCC 23270)).